The sequence spans 154 residues: Large-conductance mechanosensitive channel (154 aa).

The next 2 helical transmembrane spans lie at 14–34 (VVDLAVGIVIGAAFGAIVNSL) and 86–106 (VFINALINFLILAMAIFFFVV).

Belongs to the MscL family. In terms of assembly, homopentamer.

Its subcellular location is the cell membrane. Channel that opens in response to stretch forces in the membrane lipid bilayer. May participate in the regulation of osmotic pressure changes within the cell. In Dehalococcoides mccartyi (strain CBDB1), this protein is Large-conductance mechanosensitive channel.